The following is a 161-amino-acid chain: 6,7-dimethyl-8-ribityllumazine synthase (161 aa).

5-amino-6-(D-ribitylamino)uracil contacts are provided by residues F23, 61-63, and 85-87; these read SFE and AVI. Residue 90 to 91 participates in (2S)-2-hydroxy-3-oxobutyl phosphate binding; sequence DT. H93 serves as the catalytic Proton donor. A 5-amino-6-(D-ribitylamino)uracil-binding site is contributed by F118. R132 serves as a coordination point for (2S)-2-hydroxy-3-oxobutyl phosphate.

This sequence belongs to the DMRL synthase family.

It carries out the reaction (2S)-2-hydroxy-3-oxobutyl phosphate + 5-amino-6-(D-ribitylamino)uracil = 6,7-dimethyl-8-(1-D-ribityl)lumazine + phosphate + 2 H2O + H(+). The protein operates within cofactor biosynthesis; riboflavin biosynthesis; riboflavin from 2-hydroxy-3-oxobutyl phosphate and 5-amino-6-(D-ribitylamino)uracil: step 1/2. Functionally, catalyzes the formation of 6,7-dimethyl-8-ribityllumazine by condensation of 5-amino-6-(D-ribitylamino)uracil with 3,4-dihydroxy-2-butanone 4-phosphate. This is the penultimate step in the biosynthesis of riboflavin. This Synechococcus sp. (strain WH7803) protein is 6,7-dimethyl-8-ribityllumazine synthase.